The primary structure comprises 382 residues: MEMEMEMVVAVPSPEVPAEEERALIRDITVAAEAHAKEGDTFFLITHRWWQSWIDYVIQDLANSTNNGSHHHEHGSNVLRRPGAIDNTDLIDDTASEVSNMEIELHDTLVEGRDYILLPQQVWEKLHGWYGGGPTLPRKAINTGLSQTDLAIEVYPLRLQLLLAPKGEQAVIRISKKDTVGELHKKACEVFDLIPDEVCIWDYYGRTRHSLMDNLEKTLDDANIQMDQDILVEVTTDANGSLDGGCIGSIQENEYLERESTSLIADASKSGLSNENFASNNYTSRSYSSSLTQSQYLRSSNGDLDNMHGTSAMITRGSPLGLTGLLNLGNTCFMNSAIQCLVHTPEFARYFREDYHREINWQNPLGMVVSTLSTSMALKPYV.

A DUSP domain is found at 16 to 141 (VPAEEERALI…GGPTLPRKAI (126 aa)). Residues 323–382 (TGLLNLGNTCFMNSAIQCLVHTPEFARYFREDYHREINWQNPLGMVVSTLSTSMALKPYV) enclose the USP domain.

Belongs to the peptidase C19 family. In terms of tissue distribution, widely expressed with the highest expression in floral organs.

Its subcellular location is the cell membrane. Functionally, plays an important role in the development of floral organs and chloroplasts. Does not possess deubiquitinating enzyme activity in vitro. This Oryza sativa subsp. japonica (Rice) protein is Inactive ubiquitin-specific protease 5.